Consider the following 136-residue polypeptide: MSDRAEVRNIPFKLGMYLTVGGVVNSNATRFSINVGESTDSIAMHMDHRFSYGADQNVLVLNSLVHNVGWQQEERSKKFPFTKGDHFQTTITFDTHTFYIQLSNGETVEFPNRNKDAAFNLIYLAGDARLTFVRLE.

Position 2 is an N-acetylserine (serine 2). Residues 4–136 enclose the Galectin domain; the sequence is RAEVRNIPFK…DARLTFVRLE (133 aa). A beta-D-galactoside is bound at residue 70–76; that stretch reads WQQEERS.

As to quaternary structure, homodimer.

This protein binds beta-galactoside. Its physiological function is not yet known. The chain is Congerin-2 from Conger myriaster (Conger eel).